An 85-amino-acid polypeptide reads, in one-letter code: MSQISERVIDLISEKLNVEKSEVTLEADFANNLGADSLDTVELIMDLEKEFNMNPIPNDESIAIKTVGDAIAYIESHANEAATKS.

One can recognise a Carrier domain in the interval 2–78; sequence SQISERVIDL…DAIAYIESHA (77 aa). Position 37 is an O-(pantetheine 4'-phosphoryl)serine (S37).

This sequence belongs to the acyl carrier protein (ACP) family. Post-translationally, 4'-phosphopantetheine is transferred from CoA to a specific serine of apo-ACP by AcpS. This modification is essential for activity because fatty acids are bound in thioester linkage to the sulfhydryl of the prosthetic group.

The protein localises to the cytoplasm. It participates in lipid metabolism; fatty acid biosynthesis. In terms of biological role, carrier of the growing fatty acid chain in fatty acid biosynthesis. This chain is Acyl carrier protein, found in Azobacteroides pseudotrichonymphae genomovar. CFP2.